A 215-amino-acid chain; its full sequence is Pyrrolidone-carboxylate peptidase (215 aa).

Catalysis depends on residues Glu78, Cys141, and His165.

Belongs to the peptidase C15 family. In terms of assembly, homotetramer.

It localises to the cytoplasm. The enzyme catalyses Release of an N-terminal pyroglutamyl group from a polypeptide, the second amino acid generally not being Pro.. Functionally, removes 5-oxoproline from various penultimate amino acid residues except L-proline. The polypeptide is Pyrrolidone-carboxylate peptidase (pcp) (Streptococcus pyogenes serotype M1).